We begin with the raw amino-acid sequence, 71 residues long: Mitotic-spindle organizing protein 1 (71 aa).

Belongs to the MOZART1 family. Part of the gamma-tubulin complex.

Its subcellular location is the cytoplasm. The protein localises to the cytoskeleton. It is found in the microtubule organizing center. The protein resides in the spindle pole body. Functionally, required for gamma-tubulin complex recruitment to the microtubule organizing center (MTOC). This chain is Mitotic-spindle organizing protein 1, found in Aspergillus clavatus (strain ATCC 1007 / CBS 513.65 / DSM 816 / NCTC 3887 / NRRL 1 / QM 1276 / 107).